The primary structure comprises 131 residues: Photosystem II reaction center Psb28 protein (131 aa).

Residues 110–131 (NGLGYSQNQKSDQTDAATEEQA) form a disordered region. Polar residues predominate over residues 112–125 (LGYSQNQKSDQTDA).

The protein belongs to the Psb28 family. As to quaternary structure, part of the photosystem II complex.

It localises to the cellular thylakoid membrane. The protein is Photosystem II reaction center Psb28 protein of Synechococcus sp. (strain CC9902).